A 253-amino-acid polypeptide reads, in one-letter code: Aminoglycoside nucleotidyltransferase (4') (253 aa).

Homodimer.

The enzyme catalyses kanamycin A + ATP = 4'-adenylylkanamycin A + diphosphate. It carries out the reaction amikacin + ATP = 4'-adenylylamikacin + diphosphate. The catalysed reaction is neomycin B + ATP = 4'-adenylylneomycin B + diphosphate. It catalyses the reaction paromomycin + ATP = 4'-adenylylparomomycin + diphosphate. The enzyme catalyses ribostamycin + ATP = 4'-adenylylribostamycin + diphosphate. It carries out the reaction tobramycin + ATP = 4'-adenylyltobramycin + diphosphate. The catalysed reaction is kanamycin A + CTP = 4'-cytidylylkanamycin A + diphosphate. It catalyses the reaction kanamycin A + GTP = 4'-guanylylkanamycin A + diphosphate. The enzyme catalyses kanamycin A + ITP = 4'-inosinylylkanamycin A + diphosphate. It carries out the reaction dTTP + kanamycin A = 4'-thymidylylkanamycin A + diphosphate. The catalysed reaction is kanamycin A + UTP = 4'-uridylylkanamycin A + diphosphate. It catalyses the reaction kanamycin A + dATP = 4'-(2'-deoxyadenylyl)kanamycin A + diphosphate. The enzyme catalyses kanamycin A + dCTP = 4'-(2'-deoxycytidylyl)kanamycin A + diphosphate. It carries out the reaction kanamycin A + dGTP = 4'-(2'-deoxyguanylyl)kanamycin A + diphosphate. The catalysed reaction is dUTP + kanamycin A = 4'-(2'-deoxyuridylyl)kanamycin A + diphosphate. It catalyses the reaction amikacin + GTP = 4'-guanylylamikacin + diphosphate. The enzyme catalyses amikacin + ITP = 4'-inosinylylamikacin + diphosphate. It carries out the reaction amikacin + CTP = 4'-cytidylylamikacin + diphosphate. The catalysed reaction is amikacin + UTP = 4'-uridylylamikacin + diphosphate. It catalyses the reaction amikacin + dTTP = 4'-thymidylylamikacin + diphosphate. In terms of biological role, inactivates aminoglycoside antibiotics such as kanamycin by catalyzing the transfer of a nucleotidyl group from nucleoside triphosphates such as (d)ATP to the 4'-hydroxyl group of the aminoglycoside. This Bacillus sp protein is Aminoglycoside nucleotidyltransferase (4').